The chain runs to 109 residues: U-scoloptoxin(16)-Cw1a (109 aa).

Residues Met1–Ala21 form the signal peptide.

This sequence belongs to the scoloptoxin-16 family. Contains 4 disulfide bonds. In terms of tissue distribution, expressed by the venom gland.

It localises to the secreted. The protein is U-scoloptoxin(16)-Cw1a of Cormocephalus westwoodi (Westwood's green centipede).